A 711-amino-acid polypeptide reads, in one-letter code: Ribosomal RNA large subunit methyltransferase K/L (711 aa).

Residues 43-154 (LGYRITLWSR…RGQITIGLNF (112 aa)) enclose the THUMP domain.

It belongs to the methyltransferase superfamily. RlmKL family.

It is found in the cytoplasm. It catalyses the reaction guanosine(2445) in 23S rRNA + S-adenosyl-L-methionine = N(2)-methylguanosine(2445) in 23S rRNA + S-adenosyl-L-homocysteine + H(+). The catalysed reaction is guanosine(2069) in 23S rRNA + S-adenosyl-L-methionine = N(2)-methylguanosine(2069) in 23S rRNA + S-adenosyl-L-homocysteine + H(+). Its function is as follows. Specifically methylates the guanine in position 2445 (m2G2445) and the guanine in position 2069 (m7G2069) of 23S rRNA. This is Ribosomal RNA large subunit methyltransferase K/L from Shewanella sediminis (strain HAW-EB3).